We begin with the raw amino-acid sequence, 157 residues long: SsrA-binding protein (157 aa).

The protein belongs to the SmpB family.

It localises to the cytoplasm. Functionally, required for rescue of stalled ribosomes mediated by trans-translation. Binds to transfer-messenger RNA (tmRNA), required for stable association of tmRNA with ribosomes. tmRNA and SmpB together mimic tRNA shape, replacing the anticodon stem-loop with SmpB. tmRNA is encoded by the ssrA gene; the 2 termini fold to resemble tRNA(Ala) and it encodes a 'tag peptide', a short internal open reading frame. During trans-translation Ala-aminoacylated tmRNA acts like a tRNA, entering the A-site of stalled ribosomes, displacing the stalled mRNA. The ribosome then switches to translate the ORF on the tmRNA; the nascent peptide is terminated with the 'tag peptide' encoded by the tmRNA and targeted for degradation. The ribosome is freed to recommence translation, which seems to be the essential function of trans-translation. The polypeptide is SsrA-binding protein (Aquifex aeolicus (strain VF5)).